Here is a 270-residue protein sequence, read N- to C-terminus: Tryptophan synthase alpha chain (270 aa).

Residues Glu-49 and Asp-60 each act as proton acceptor in the active site.

It belongs to the TrpA family. Tetramer of two alpha and two beta chains.

The enzyme catalyses (1S,2R)-1-C-(indol-3-yl)glycerol 3-phosphate + L-serine = D-glyceraldehyde 3-phosphate + L-tryptophan + H2O. It functions in the pathway amino-acid biosynthesis; L-tryptophan biosynthesis; L-tryptophan from chorismate: step 5/5. The alpha subunit is responsible for the aldol cleavage of indoleglycerol phosphate to indole and glyceraldehyde 3-phosphate. The chain is Tryptophan synthase alpha chain from Marinobacter nauticus (strain ATCC 700491 / DSM 11845 / VT8) (Marinobacter aquaeolei).